We begin with the raw amino-acid sequence, 508 residues long: CUGBP Elav-like family member 2 (508 aa).

Necessary for RNA-binding, TNNT2 exon 5 and NMDA R1 exon 21 inclusion stretches follow at residues 1 to 283 (MRCP…LQNL) and 357 to 508 (LAGM…SKPY). RRM domains follow at residues 40 to 123 (IKMF…PADS), 132 to 212 (RKLF…FADT), and 423 to 501 (ANLF…LKRS).

It belongs to the CELF/BRUNOL family. Interacts with A1CF. In terms of tissue distribution, expressed in tongue, spleen and brain (at protein level). Expressed in liver, thigh, stomach, lung and heart to very low levels (at protein level). Expressed in heart, brain, lung and muscle.

It localises to the nucleus. The protein resides in the cytoplasm. In terms of biological role, RNA-binding protein implicated in the regulation of several post-transcriptional events. Involved in pre-mRNA alternative splicing, mRNA translation and stability. Mediates exon inclusion and/or exclusion in pre-mRNA that are subject to tissue-specific and developmentally regulated alternative splicing. Specifically activates exon 5 inclusion of TNNT2 in embryonic, but not adult, skeletal muscle. Activates TNNT2 exon 5 inclusion by antagonizing the repressive effect of PTB. Acts both as an activator and as a repressor of a pair of coregulated exons: promotes inclusion of the smooth muscle (SM) exon but exclusion of the non-muscle (NM) exon in actinin pre-mRNAs. Promotes inclusion of exonS 21 and exclusion of exon 5 of the NMDA receptor R1 pre-mRNA. Involved in the apoB RNA editing activity. Increases COX2 mRNA stability and inhibits COX2 mRNA translation in epithelial cells after radiation injury. Modulates the cellular apoptosis program by regulating COX2-mediated prostaglandin E2 (PGE2) expression. Binds to (CUG)n triplet repeats in the 3'-UTR of transcripts such as DMPK. Binds to the muscle-specific splicing enhancer (MSE) intronic sites flanking the TNNT2 alternative exon 5. Binds preferentially to UG-rich sequences, in particular UG repeat and UGUU motifs. Binds to apoB mRNA, specifically to AU-rich sequences located immediately upstream of the edited cytidine. Binds AU-rich sequences in the 3'-UTR of COX2 mRNA. Binds to an intronic RNA element responsible for the silencing of exon 21 splicing. Binds to (CUG)n repeats. May be a specific regulator of miRNA biogenesis. Binds to primary microRNA pri-MIR140 and, with CELF1, negatively regulates the processing to mature miRNA. The chain is CUGBP Elav-like family member 2 (Celf2) from Mus musculus (Mouse).